A 363-amino-acid polypeptide reads, in one-letter code: MKLRTCCISLMLLLALPLQAARIKDVSEVAGVRSNQLVGYGLVVGLPGTGETTPFTDQSFNAMLQNFGIQLPAGTKPKTKNVAAVAVNATLPAFTKQGQKIDITVSSIGSAKSLRGGTLLQTFLKGLDGKVYAVAQGSLVVGGFSVTGADGSKLVGNIPTVGRISNGAMVEQEVPNPFGRGDFLTFNLFESDFSTAQRLADAVNEFLGPEMAAAIDATSVRVRAPRDVSQRVAFLATVENIEFDPAVGAAKIIVNSRTGTIVIGQNVKLKPAAITHGGMTVSIKENYQVSQPAPFSGGETVVVPNSEIEVTEKDSRMFKFEPGVTLDELVRAVNQVGAAPSDLMAILQALKQAGAIEGQLIII.

The first 20 residues, 1 to 20 (MKLRTCCISLMLLLALPLQA), serve as a signal peptide directing secretion.

It belongs to the FlgI family. In terms of assembly, the basal body constitutes a major portion of the flagellar organelle and consists of four rings (L,P,S, and M) mounted on a central rod.

It is found in the periplasm. The protein resides in the bacterial flagellum basal body. In terms of biological role, assembles around the rod to form the L-ring and probably protects the motor/basal body from shearing forces during rotation. This chain is Flagellar P-ring protein 2, found in Photobacterium profundum (strain SS9).